Consider the following 175-residue polypeptide: Alkyl hydroperoxide reductase AhpD (175 aa).

The active-site Proton donor is Cys131. A disulfide bridge connects residues Cys131 and Cys134. The active-site Cysteine sulfenic acid (-SOH) intermediate is Cys134.

This sequence belongs to the AhpD family.

It carries out the reaction N(6)-[(R)-dihydrolipoyl]-L-lysyl-[lipoyl-carrier protein] + a hydroperoxide = N(6)-[(R)-lipoyl]-L-lysyl-[lipoyl-carrier protein] + an alcohol + H2O. In terms of biological role, antioxidant protein with alkyl hydroperoxidase activity. Required for the reduction of the AhpC active site cysteine residues and for the regeneration of the AhpC enzyme activity. The protein is Alkyl hydroperoxide reductase AhpD of Brucella anthropi (strain ATCC 49188 / DSM 6882 / CCUG 24695 / JCM 21032 / LMG 3331 / NBRC 15819 / NCTC 12168 / Alc 37) (Ochrobactrum anthropi).